The primary structure comprises 324 residues: mRNA decay activator protein ZFP36 (324 aa).

A necessary for nuclear export region spans residues Met-1–Pro-15. The tract at residues Met-1–Thr-98 is necessary and sufficient for the association with mRNA decay enzymes and mRNA decay activation. Necessary for localization of ARE-containing mRNAs to processing bodies (PBs) stretches follow at residues Met-1 to Ala-172 and Thr-98 to Glu-324. The span at Pro-15 to Pro-46 shows a compositional bias: low complexity. A disordered region spans residues Pro-15–Ala-50. Position 58 is a phosphoserine; by MAPKAPK2 (Ser-58). Ser-64 is subject to Phosphoserine. The stretch at Pro-69–Gly-73 is one P-P-P-P-G repeat. A disordered region spans residues Pro-76–Ser-100. A phosphoserine mark is found at Ser-86 and Ser-88. At Thr-90 the chain carries Phosphothreonine. Residue Ser-91 is modified to Phosphoserine. Positions Thr-93 to Pro-166 are necessary for nuclear localization. The interval Thr-95–Ala-171 is necessary for RNA-binding. 2 consecutive C3H1-type zinc fingers follow at residues Arg-101 to Gly-129 and Lys-139 to Ser-167. A necessary for interaction with PABPN1 region spans residues Arg-101–Arg-192. Ser-167 carries the post-translational modification Phosphoserine. The necessary for mRNA decay activation stretch occupies residues Ala-172–Glu-324. Residue Ser-184 is modified to Phosphoserine; by MAPKAPK2. Disordered stretches follow at residues Phe-185–Ser-227 and Pro-270–Glu-324. Position 195 is a phosphoserine (Ser-195). Residues Pro-196–Ser-200 form a P-P-P-P-G repeat. Low complexity predominate over residues Pro-204–Ser-214. At Ser-216 the chain carries Phosphoserine. The P-P-P-P-G repeat unit spans residues Pro-218–Gly-222. Residue Ser-227 is modified to Phosphoserine; by MAPK1; in vitro. Residues Ser-274, Ser-294, and Ser-321 each carry the phosphoserine modification. An interaction with CNOT1 region spans residues Ala-310–Glu-324.

In terms of assembly, associates with cytoplasmic CCR4-NOT and PAN2-PAN3 deadenylase complexes to trigger ARE-containing mRNA deadenylation and decay processes. Part of a mRNA decay activation complex at least composed of poly(A)-specific exoribonucleases CNOT6, EXOSC2 and XRN1 and mRNA-decapping enzymes DCP1A and DCP2. Associates with the RNA exosome complex. Interacts (via phosphorylated form) with 14-3-3 proteins; these interactions promote exclusion of ZFP36 from cytoplasmic stress granules in response to arsenite treatment in a MAPKAPK2-dependent manner and does not prevent CCR4-NOT deadenylase complex recruitment or ZFP36-induced ARE-containing mRNA deadenylation and decay processes. Interacts with 14-3-3 proteins; these interactions occur in response to rapamycin in an Akt-dependent manner. Interacts with AGO2 and AGO4. Interacts (via C-terminus) with CNOT1; this interaction occurs in a RNA-independent manner and induces mRNA deadenylation. Interacts (via N-terminus) with CNOT6. Interacts with CNOT6L. Interacts (via C-terminus) with CNOT7; this interaction occurs in a RNA-independent manner, induces mRNA deadenylation and is inhibited in a phosphorylation MAPKAPK2-dependent manner. Interacts (via unphosphorylated form) with CNOT8; this interaction occurs in a RNA-independent manner and is inhibited in a phosphorylation MAPKAPK2-dependent manner. Interacts with DCP1A. Interacts (via N-terminus) with DCP2. Interacts with EDC3. Interacts (via N-terminus) with EXOSC2. Interacts with heat shock 70 kDa proteins. Interacts with KHSRP; this interaction increases upon cytokine-induced treatment. Interacts with MAP3K4; this interaction enhances the association with SH3KBP1/CIN85. Interacts with MAPKAPK2; this interaction occurs upon skeletal muscle satellite cell activation. Interacts with NCL. Interacts with NUP214; this interaction increases upon lipopolysaccharide (LPS) stimulation. Interacts with PABPC1; this interaction occurs in a RNA-dependent manner. Interacts (via hypophosphorylated form) with PABPN1 (via RRM domain and C-terminal arginine-rich region); this interaction occurs in the nucleus in a RNA-independent manner, decreases in presence of single-stranded poly(A) RNA-oligomer and in a p38 MAPK-dependent-manner and inhibits nuclear poly(A) tail synthesis. Interacts with PAN2. Interacts (via C3H1-type zinc finger domains) with PKM. Interacts (via C3H1-type zinc finger domains) with nuclear RNA poly(A) polymerase. Interacts with PPP2CA; this interaction occurs in LPS-stimulated cells and induces ZFP36 dephosphorylation, and hence may promote ARE-containing mRNAs decay. Interacts (via C-terminus) with PRR5L (via C-terminus); this interaction may accelerate ZFP36-mediated mRNA decay during stress. Interacts (via C-terminus) with SFN; this interaction occurs in a phosphorylation-dependent manner. Interacts (via extreme C-terminal region) with SH3KBP1/CIN85 (via SH3 domains); this interaction enhances MAP3K4-induced phosphorylation of ZFP36 at Ser-64 and Ser-91 and does not alter neither ZFP36 binding to ARE-containing transcripts nor TNF-alpha mRNA decay. Interacts with XRN1. Interacts (via C-terminus and Ser-184 phosphorylated form) with YWHAB; this interaction occurs in a p38/MAPKAPK2-dependent manner, increases cytoplasmic localization of ZFP36 and protects ZFP36 from Ser-184 dephosphorylation by serine/threonine phosphatase 2A, and hence may be crucial for stabilizing ARE-containing mRNAs. Interacts (via phosphorylated form) with YWHAE. Interacts (via C-terminus) with YWHAG; this interaction occurs in a phosphorylation-dependent manner. Interacts with YWHAH; this interaction occurs in a phosphorylation-dependent manner. Interacts with YWHAQ; this interaction occurs in a phosphorylation-dependent manner. Interacts with (via C-terminus) YWHAZ; this interaction occurs in a phosphorylation-dependent manner. Does not interact with SH3KBP1. Interacts (via P-P-P-P-G repeats) with GIGYF2; the interaction is direct. In terms of processing, phosphorylated. Phosphorylation at serine and/or threonine residues occurs in a p38 MAPK- and MAPKAPK2-dependent manner. Phosphorylated by MAPKAPK2 at Ser-58 and Ser-184; phosphorylation increases its stability and cytoplasmic localization, promotes binding to 14-3-3 adapter proteins and inhibits the recruitment of cytoplasmic CCR4-NOT and PAN2-PAN3 deadenylase complexes to the mRNA decay machinery, thereby inhibiting ZFP36-induced ARE-containing mRNA deadenylation and decay processes. Phosphorylation by MAPKAPK2 does not impair ARE-containing RNA-binding. Phosphorylated in a MAPKAPK2- and p38 MAPK-dependent manner upon skeletal muscle satellite cell activation; this phosphorylation inhibits ZFP36-mediated mRNA decay activity, and hence stabilizes MYOD1 mRNA. Phosphorylated by MAPK1 upon mitogen stimulation. Phosphorylated at Ser-64 and Ser-91; these phosphorylations increase in a SH3KBP1-dependent manner. Phosphorylated at serine and threonine residues in a pyruvate kinase PKM- and p38 MAPK-dependent manner. Phosphorylation at Ser-58 may participate in the PKM-mediated degradation of ZFP36 in a p38 MAPK-dependent manner. Dephosphorylated by serine/threonine phosphatase 2A at Ser-184. Ubiquitinated; pyruvate kinase (PKM)-dependent ubiquitination leads to proteasomal degradation through a p38 MAPK signaling pathway.

It is found in the nucleus. The protein localises to the cytoplasm. It localises to the cytoplasmic granule. The protein resides in the P-body. Zinc-finger RNA-binding protein that destabilizes numerous cytoplasmic AU-rich element (ARE)-containing mRNA transcripts by promoting their poly(A) tail removal or deadenylation, and hence provide a mechanism for attenuating protein synthesis. Acts as an 3'-untranslated region (UTR) ARE mRNA-binding adapter protein to communicate signaling events to the mRNA decay machinery. Recruits deadenylase CNOT7 (and probably the CCR4-NOT complex) via association with CNOT1, and hence promotes ARE-mediated mRNA deadenylation. Also functions by recruiting components of the cytoplasmic RNA decay machinery to the bound ARE-containing mRNAs. Self regulates by destabilizing its own mRNA. Binds to 3'-UTR ARE of numerous mRNAs. Also binds to ARE of its own mRNA. Plays a role in anti-inflammatory responses; suppresses tumor necrosis factor (TNF)-alpha production by stimulating ARE-mediated TNF-alpha mRNA decay and several other inflammatory ARE-containing mRNAs in interferon (IFN)- and/or lipopolysaccharide (LPS)-induced macrophages. Also plays a role in the regulation of dendritic cell maturation at the post-transcriptional level, and hence operates as part of a negative feedback loop to limit the inflammatory response. Promotes ARE-mediated mRNA decay of hypoxia-inducible factor HIF1A mRNA during the response of endothelial cells to hypoxia. Positively regulates early adipogenesis of preadipocytes by promoting ARE-mediated mRNA decay of immediate early genes (IEGs). Negatively regulates hematopoietic/erythroid cell differentiation by promoting ARE-mediated mRNA decay of the transcription factor STAT5B mRNA. Plays a role in maintaining skeletal muscle satellite cell quiescence by promoting ARE-mediated mRNA decay of the myogenic determination factor MYOD1 mRNA. Also associates with and regulates the expression of non-ARE-containing target mRNAs at the post-transcriptional level, such as MHC class I mRNAs. Participates in association with argonaute RISC catalytic components in the ARE-mediated mRNA decay mechanism; assists microRNA (miRNA) targeting ARE-containing mRNAs. May also play a role in the regulation of cytoplasmic mRNA decapping; enhances decapping of ARE-containing RNAs, in vitro. Involved in the delivery of target ARE-mRNAs to processing bodies (PBs). In addition to its cytosolic mRNA-decay function, affects nuclear pre-mRNA processing. Negatively regulates nuclear poly(A)-binding protein PABPN1-stimulated polyadenylation activity on ARE-containing pre-mRNA during LPS-stimulated macrophages. Also involved in the regulation of stress granule (SG) and P-body (PB) formation and fusion. Plays a role in the regulation of keratinocyte proliferation, differentiation and apoptosis. Plays a role as a tumor suppressor by inhibiting cell proliferation in breast cancer cells. This Bos taurus (Bovine) protein is mRNA decay activator protein ZFP36.